We begin with the raw amino-acid sequence, 429 residues long: Serine--tRNA ligase (429 aa).

An L-serine-binding site is contributed by T236 to E238. Residue R267 to E269 coordinates ATP. E290 serves as a coordination point for L-serine. E354–S357 serves as a coordination point for ATP. S390 contributes to the L-serine binding site.

The protein belongs to the class-II aminoacyl-tRNA synthetase family. Type-1 seryl-tRNA synthetase subfamily. As to quaternary structure, homodimer. The tRNA molecule binds across the dimer.

The protein localises to the cytoplasm. The catalysed reaction is tRNA(Ser) + L-serine + ATP = L-seryl-tRNA(Ser) + AMP + diphosphate + H(+). It carries out the reaction tRNA(Sec) + L-serine + ATP = L-seryl-tRNA(Sec) + AMP + diphosphate + H(+). It participates in aminoacyl-tRNA biosynthesis; selenocysteinyl-tRNA(Sec) biosynthesis; L-seryl-tRNA(Sec) from L-serine and tRNA(Sec): step 1/1. Catalyzes the attachment of serine to tRNA(Ser). Is also able to aminoacylate tRNA(Sec) with serine, to form the misacylated tRNA L-seryl-tRNA(Sec), which will be further converted into selenocysteinyl-tRNA(Sec). The chain is Serine--tRNA ligase from Vesicomyosocius okutanii subsp. Calyptogena okutanii (strain HA).